Here is a 213-residue protein sequence, read N- to C-terminus: ATP-dependent dethiobiotin synthetase BioD 2 (213 aa).

13-18 contacts ATP; it reads DIGKTI. Thr-17 lines the Mg(2+) pocket. The active site involves Lys-38. Thr-42 contacts substrate. ATP-binding positions include Asp-50 and 115 to 118; that span reads EGAG. 2 residues coordinate Mg(2+): Asp-50 and Glu-115.

It belongs to the dethiobiotin synthetase family. As to quaternary structure, homodimer. Mg(2+) is required as a cofactor.

Its subcellular location is the cytoplasm. It carries out the reaction (7R,8S)-7,8-diammoniononanoate + CO2 + ATP = (4R,5S)-dethiobiotin + ADP + phosphate + 3 H(+). The protein operates within cofactor biosynthesis; biotin biosynthesis; biotin from 7,8-diaminononanoate: step 1/2. Catalyzes a mechanistically unusual reaction, the ATP-dependent insertion of CO2 between the N7 and N8 nitrogen atoms of 7,8-diaminopelargonic acid (DAPA, also called 7,8-diammoniononanoate) to form a ureido ring. The chain is ATP-dependent dethiobiotin synthetase BioD 2 from Pasteurella multocida (strain Pm70).